The primary structure comprises 865 residues: Alanine--tRNA ligase (865 aa).

H554, H558, C656, and H660 together coordinate Zn(2+).

This sequence belongs to the class-II aminoacyl-tRNA synthetase family. Zn(2+) is required as a cofactor.

It localises to the cytoplasm. The enzyme catalyses tRNA(Ala) + L-alanine + ATP = L-alanyl-tRNA(Ala) + AMP + diphosphate. Functionally, catalyzes the attachment of alanine to tRNA(Ala) in a two-step reaction: alanine is first activated by ATP to form Ala-AMP and then transferred to the acceptor end of tRNA(Ala). Also edits incorrectly charged Ser-tRNA(Ala) and Gly-tRNA(Ala) via its editing domain. This Francisella tularensis subsp. novicida (strain U112) protein is Alanine--tRNA ligase.